The chain runs to 3392 residues: Genome polyprotein (3392 aa).

An interaction with host EXOC1 region spans residues 1–15 (MNNQRKKTGRPSFNM). The Cytoplasmic portion of the chain corresponds to 1–101 (MNNQRKKTGR…LNIMNRRKRS (101 aa)). A hydrophobic; homodimerization of capsid protein C region spans residues 37-72 (LLSGQGPMKLVMAFIAFLRFLAIPPTAGILARWGSF). The propeptide at 101 to 114 (SVTMLLMLLPTALA) is ER anchor for the capsid protein C, removed in mature form by serine protease NS3. Residues 102 to 119 (VTMLLMLLPTALAFHLTT) form a helical membrane-spanning segment. Over 120-242 (RGGEPHMIVS…QIQKVETWAL (123 aa)) the chain is Extracellular. A glycan (N-linked (GlcNAc...) asparagine; by host) is linked at N183. Residues 243-260 (RHPGFTVIALFLAHAIGT) form a helical membrane-spanning segment. Residue S261 is a topological domain, cytoplasmic. Residues 262–280 (ITQKGIIFILLMLVTPSMA) form a helical membrane-spanning segment. Residues 281–725 (MRCVGIGNRD…IHQIFGTAYG (445 aa)) are Extracellular-facing. Disulfide bonds link C283–C310, C340–C401, C354–C385, and C372–C396. N347 carries N-linked (GlcNAc...) asparagine; by host glycosylation. The interval 378–391 (DRGWGNGCGLFGKG) is fusion peptide. N433 is a glycosylation site (N-linked (GlcNAc...) asparagine; by host). Cystine bridges form between C465/C565 and C582/C613. The chain crosses the membrane as a helical span at residues 726 to 746 (VLFSGVSWTMKIGIGILLTWL). Residues 747–752 (GLNSRS) lie on the Cytoplasmic side of the membrane. The chain crosses the membrane as a helical span at residues 753-773 (TSLSMTCIAVGMVTLYLGVMV). The Extracellular portion of the chain corresponds to 774–1195 (QADSGCVINW…MVGANASDKM (422 aa)). 6 disulfide bridges follow: C779–C790, C830–C918, C954–C998, C1055–C1104, C1066–C1088, and C1087–C1091. N-linked (GlcNAc...) asparagine; by host glycosylation is found at N905 and N982. N-linked (GlcNAc...) asparagine; by host glycosylation is present at N1190. A helical membrane pass occupies residues 1196-1220 (GMGTTYLALMATFRMRPMFAVGLLF). The Cytoplasmic segment spans residues 1221 to 1226 (RRLTSR). A helical transmembrane segment spans residues 1227-1245 (EVLLLTVGLSLVASVELPN). Residues 1246–1269 (SLEELGDGLAMGIMMLKLLTDFQS) are Lumenal-facing. Residues 1270–1290 (HQLWATLLSLTFVKTTFSLHY) form a helical membrane-spanning segment. A topological domain (cytoplasmic) is located at residue A1291. Residues 1292–1310 (WKTMAMILSIVSLFPLCLS) form a helical membrane-spanning segment. At 1311–1315 (TTSQK) the chain is on the lumenal side. The helical transmembrane segment at 1316 to 1336 (TTWLPVLLGSLGCKPLTMFLI) threads the bilayer. Residues 1337 to 1351 (TENKIWGRKSWPLNE) are Cytoplasmic-facing. The chain crosses the membrane as a helical span at residues 1352-1370 (GIMAVGIVSILLSSLLKND). Position 1371 (V1371) is a topological domain, lumenal. The helical transmembrane segment at 1372–1391 (PLAGPLIAGGMLIACYVISG) threads the bilayer. Over 1392 to 1447 (SSADLSLEKAAEVSWEEEAEHSGASHNILVEVQDDGTMKIKDEERDDTLTILLKAT) the chain is Cytoplasmic. The segment at 1398 to 1437 (LEKAAEVSWEEEAEHSGASHNILVEVQDDGTMKIKDEERD) is interacts with and activates NS3 protease. An intramembrane region (helical) is located at residues 1448–1468 (LLAISGVYPMSIPATLFVWYF). At 1469-2148 (WQKKKQRSGV…MEELPDTIET (680 aa)) the chain is on the cytoplasmic side. The Peptidase S7 domain occupies 1476–1653 (SGVLWDTPSP…KASQEGPLPE (178 aa)). Catalysis depends on charge relay system; for serine protease NS3 activity residues H1526, D1550, and S1610. Residues 1656 to 1812 (DEVFRKRNLT…QSNAVIQDEE (157 aa)) form the Helicase ATP-binding domain. Positions 1660-1663 (RKRN) are important for RNA-binding. Residue 1669-1676 (LHPGSGKT) participates in ATP binding. Residues 1760–1763 (DEAH) carry the DEAH box motif. In terms of domain architecture, Helicase C-terminal spans 1822–1988 (SGYDWITDFP…GIIPALFEPE (167 aa)). An N6-acetyllysine; by host modification is found at K1864. Residues 2149 to 2169 (LMLLALIAVLTGGVTLFFLSG) traverse the membrane as a helical segment. The Lumenal segment spans residues 2170-2171 (RG). Residues 2172–2192 (LGKTSIGLLCVIASSALLWMA) constitute an intramembrane region (helical). A topological domain (lumenal) is located at residue S2193. A helical membrane pass occupies residues 2194–2214 (VEPHWIAASIILEFFLMVLLI). Residues 2215 to 2229 (PEPDRQRTPQDNQLA) lie on the Cytoplasmic side of the membrane. The helical transmembrane segment at 2230–2244 (YVVIGLLFMILTAAA) threads the bilayer. The Lumenal portion of the chain corresponds to 2245–2276 (NEMGLLETTKKDLGIGHAAAENHHHAAMLDVD). Residues 2277 to 2297 (LHPASAWTLYAVATTIITPMM) constitute an intramembrane region (helical). Over 2298–2349 (RHTIENTTANISLTAIANQAAILMGLDKGWPISKMDIGVPLLALGCYSQVNP) the chain is Lumenal. Residues N2303 and N2307 are each glycosylated (N-linked (GlcNAc...) asparagine; by host). A helical transmembrane segment spans residues 2350–2370 (LTLTAAVFMLVAHYAIIGPGL). The Cytoplasmic segment spans residues 2371–2415 (QAKATREAQKRTAAGIMKNPTVDGIVAIDLDPVVYDAKFEKQLGQ). Residues 2416–2436 (IMLLILCTSQILLMRTTWALC) traverse the membrane as a helical segment. The Lumenal segment spans residues 2437-2461 (ESITLATGPLTTLWEGSPGKFWNTT). N-linked (GlcNAc...) asparagine; by host glycosylation is present at N2459. Residues 2462-2482 (IAVSMANIFRGSYLAGAGLAF) traverse the membrane as a helical segment. Residues 2483 to 3392 (SLMKSLGGGR…NESDPEGALW (910 aa)) are Cytoplasmic-facing. Residues 2495–2756 (TGAQGETLGE…DVDLGAGTRH (262 aa)) form the mRNA cap 0-1 NS5-type MT domain. Residue S2549 participates in S-adenosyl-L-methionine binding. S2549 is subject to Phosphoserine. Catalysis depends on K2554, which acts as the For 2'-O-MTase activity. The SUMO-interacting motif motif lies at 2570–2573 (VIDL). S-adenosyl-L-methionine is bound by residues G2579, W2580, T2597, K2598, D2624, and V2625. The active-site For 2'-O-MTase activity is the D2639. I2640 serves as a coordination point for S-adenosyl-L-methionine. Residues K2673 and E2709 each act as for 2'-O-MTase activity in the active site. S-adenosyl-L-methionine is bound at residue Y2711. E2930, H2934, C2939, and C2942 together coordinate Zn(2+). In terms of domain architecture, RdRp catalytic spans 3020 to 3169 (GNMYADDTAG…KPIDDRFATA (150 aa)). H3204, C3220, and C3339 together coordinate Zn(2+).

The protein in the N-terminal section; belongs to the class I-like SAM-binding methyltransferase superfamily. mRNA cap 0-1 NS5-type methyltransferase family. Homodimer. Interacts (via N-terminus) with host EXOC1 (via C-terminus); this interaction results in EXOC1 degradation through the proteasome degradation pathway. As to quaternary structure, forms heterodimers with envelope protein E in the endoplasmic reticulum and Golgi. In terms of assembly, homodimer; in the endoplasmic reticulum and Golgi. Interacts with protein prM. Interacts with non-structural protein 1. Homodimer; Homohexamer when secreted. Interacts with envelope protein E. As to quaternary structure, interacts (via N-terminus) with serine protease NS3. In terms of assembly, forms a heterodimer with serine protease NS3. May form homooligomers. Forms a heterodimer with NS2B. Interacts with NS4B. Interacts with unphosphorylated RNA-directed RNA polymerase NS5; this interaction stimulates RNA-directed RNA polymerase NS5 guanylyltransferase activity. Interacts with host SHFL. As to quaternary structure, interacts with host MAVS; this interaction inhibits the synthesis of IFN-beta. Interacts with host SHFL. Interacts with host AUP1; the interaction occurs in the presence of Dengue virus NS4B and induces lipophagy which facilitates production of virus progeny particles. In terms of assembly, interacts with serine protease NS3. Homodimer. Interacts with host STAT2; this interaction inhibits the phosphorylation of the latter, and, when all viral proteins are present (polyprotein), targets STAT2 for degradation. Interacts with serine protease NS3. Post-translationally, sumoylation of RNA-directed RNA polymerase NS5 increases NS5 protein stability allowing proper viral RNA replication. In terms of processing, specific enzymatic cleavages in vivo yield mature proteins. Cleavages in the lumen of endoplasmic reticulum are performed by host signal peptidase, whereas cleavages in the cytoplasmic side are performed by the Serine protease NS3. Signal cleavage at the 2K-4B site requires a prior NS3 protease-mediated cleavage at the 4A-2K site. Cleaved in post-Golgi vesicles by a host furin, releasing the mature small envelope protein M, and peptide pr. This cleavage is incomplete as up to 30% of viral particles still carry uncleaved prM. Post-translationally, N-glycosylated. The excreted form is glycosylated and this is required for efficient secretion of the protein from infected cells. In terms of processing, acetylated by host KAT5. Acetylation modulates NS3 RNA-binding and unwinding activities and plays an important positive role for viral replication. Phosphorylated on serines residues. This phosphorylation may trigger NS5 nuclear localization. Post-translationally, N-glycosylated.

It localises to the virion. The protein resides in the host nucleus. It is found in the host cytoplasm. The protein localises to the host perinuclear region. Its subcellular location is the secreted. It localises to the virion membrane. The protein resides in the host endoplasmic reticulum membrane. It is found in the host mitochondrion. It carries out the reaction Selective hydrolysis of -Xaa-Xaa-|-Yaa- bonds in which each of the Xaa can be either Arg or Lys and Yaa can be either Ser or Ala.. The catalysed reaction is RNA(n) + a ribonucleoside 5'-triphosphate = RNA(n+1) + diphosphate. The enzyme catalyses a ribonucleoside 5'-triphosphate + H2O = a ribonucleoside 5'-diphosphate + phosphate + H(+). It catalyses the reaction ATP + H2O = ADP + phosphate + H(+). It carries out the reaction a 5'-end (5'-triphosphoguanosine)-ribonucleoside in mRNA + S-adenosyl-L-methionine = a 5'-end (N(7)-methyl 5'-triphosphoguanosine)-ribonucleoside in mRNA + S-adenosyl-L-homocysteine. The catalysed reaction is a 5'-end (N(7)-methyl 5'-triphosphoguanosine)-ribonucleoside in mRNA + S-adenosyl-L-methionine = a 5'-end (N(7)-methyl 5'-triphosphoguanosine)-(2'-O-methyl-ribonucleoside) in mRNA + S-adenosyl-L-homocysteine + H(+). Plays a role in virus budding by binding to the cell membrane and gathering the viral RNA into a nucleocapsid that forms the core of a mature virus particle. During virus entry, may induce genome penetration into the host cytoplasm after hemifusion induced by the surface proteins. Can migrate to the cell nucleus where it modulates host functions. Overcomes the anti-viral effects of host EXOC1 by sequestering and degrading the latter through the proteasome degradation pathway. In terms of biological role, inhibits RNA silencing by interfering with host Dicer. Functionally, prevents premature fusion activity of envelope proteins in trans-Golgi by binding to envelope protein E at pH6.0. After virion release in extracellular space, gets dissociated from E dimers. Its function is as follows. Acts as a chaperone for envelope protein E during intracellular virion assembly by masking and inactivating envelope protein E fusion peptide. prM is the only viral peptide matured by host furin in the trans-Golgi network probably to avoid catastrophic activation of the viral fusion activity in acidic Golgi compartment prior to virion release. prM-E cleavage is inefficient, and many virions are only partially matured. These uncleaved prM would play a role in immune evasion. May play a role in virus budding. Exerts cytotoxic effects by activating a mitochondrial apoptotic pathway through M extodomain. May display a viroporin activity. In terms of biological role, binds to host cell surface receptor and mediates fusion between viral and cellular membranes. Envelope protein is synthesized in the endoplasmic reticulum in the form of heterodimer with protein prM. They play a role in virion budding in the ER, and the newly formed immature particle is covered with 60 spikes composed of heterodimer between precursor prM and envelope protein E. The virion is transported to the Golgi apparatus where the low pH causes dissociation of PrM-E heterodimers and formation of E homodimers. prM-E cleavage is ineficient, and many virions are only partially matured. These uncleaved prM would play a role in immune evasion. Functionally, involved in immune evasion, pathogenesis and viral replication. Once cleaved off the polyprotein, is targeted to three destinations: the viral replication cycle, the plasma membrane and the extracellular compartment. Essential for viral replication. Required for formation of the replication complex and recruitment of other non-structural proteins to the ER-derived membrane structures. Excreted as a hexameric lipoparticle that plays a role against host immune response. Antagonizing the complement function. Binds to the host macrophages and dendritic cells. Inhibits signal transduction originating from Toll-like receptor 3 (TLR3). Its function is as follows. Disrupts the host endothelial glycocalyx layer of host pulmonary microvascular endothelial cells, inducing degradation of sialic acid and shedding of heparan sulfate proteoglycans. NS1 induces expression of sialidases, heparanase, and activates cathepsin L, which activates heparanase via enzymatic cleavage. These effects are probably linked to the endothelial hyperpermeability observed in severe dengue disease. Component of the viral RNA replication complex that functions in virion assembly and antagonizes the host immune response. In terms of biological role, required cofactor for the serine protease function of NS3. May have membrane-destabilizing activity and form viroporins. Functionally, displays three enzymatic activities: serine protease, NTPase and RNA helicase. NS3 serine protease, in association with NS2B, performs its autocleavage and cleaves the polyprotein at dibasic sites in the cytoplasm: C-prM, NS2A-NS2B, NS2B-NS3, NS3-NS4A, NS4A-2K and NS4B-NS5. NS3 RNA helicase binds RNA and unwinds dsRNA in the 3' to 5' direction. Its function is as follows. Regulates the ATPase activity of the NS3 helicase activity. NS4A allows NS3 helicase to conserve energy during unwinding. Plays a role in the inhibition of the host innate immune response. Interacts with host MAVS and thereby prevents the interaction between RIGI and MAVS. In turn, IFN-beta production is impaired. Interacts with host AUP1 which mediates induction of lipophagy in host cells and facilitates production of virus progeny particles. Functions as a signal peptide for NS4B and is required for the interferon antagonism activity of the latter. In terms of biological role, induces the formation of ER-derived membrane vesicles where the viral replication takes place. Inhibits interferon (IFN)-induced host STAT1 phosphorylation and nuclear translocation, thereby preventing the establishment of a cellular antiviral state by blocking the IFN-alpha/beta pathway. Functionally, replicates the viral (+) and (-) RNA genome, and performs the capping of genomes in the cytoplasm. NS5 methylates viral RNA cap at guanine N-7 and ribose 2'-O positions. Besides its role in RNA genome replication, also prevents the establishment of cellular antiviral state by blocking the interferon-alpha/beta (IFN-alpha/beta) signaling pathway. Inhibits host TYK2 and STAT2 phosphorylation, thereby preventing activation of JAK-STAT signaling pathway. This is Genome polyprotein from Aedes aegypti (Yellowfever mosquito).